The sequence spans 47 residues: Heat shock protein HSP 90 (47 aa).

The protein belongs to the heat shock protein 90 family. Homodimer.

The protein localises to the cytoplasm. Putative molecular chaperone that may promote the maturation, structural maintenance and proper regulation of specific target proteins. The chain is Heat shock protein HSP 90 from Oryctolagus cuniculus (Rabbit).